The sequence spans 216 residues: 3-keto-L-gulonate-6-phosphate decarboxylase UlaD (216 aa).

Substrate is bound at residue aspartate 11. Mg(2+)-binding residues include glutamate 33 and aspartate 62. Arginine 192 is a binding site for substrate.

It belongs to the HPS/KGPDC family. KGPDC subfamily. As to quaternary structure, homodimer. Requires Mg(2+) as cofactor.

It catalyses the reaction 3-dehydro-L-gulonate 6-phosphate + H(+) = L-xylulose 5-phosphate + CO2. It functions in the pathway cofactor degradation; L-ascorbate degradation; D-xylulose 5-phosphate from L-ascorbate: step 2/4. In terms of biological role, catalyzes the decarboxylation of 3-keto-L-gulonate-6-P into L-xylulose-5-P. Is involved in the anaerobic L-ascorbate utilization. This chain is 3-keto-L-gulonate-6-phosphate decarboxylase UlaD, found in Salmonella choleraesuis (strain SC-B67).